A 390-amino-acid polypeptide reads, in one-letter code: MAATAASSLQIATRRPSMSSPSKILKAGTYIVGANPGNASWDKLSCTRQLSNLGCLRNHSAVPTCKRPFSFSTRAMSESSENKAPSGLPIDLRGKRAFIAGIADDNGYGWAIAKSLAAAGAEILVGTWVPALNIFETSLRRGKFDQSRVLPDGSLMEIKKVYALDAVFDNPEDVPEDVKTNKRYAGSSNWTVQEAAECVKKDFGSIDILVHSLANGPEVSKPLLETSRKGYLAAISASSYSFVSLLRHFLPIMNPGGASISLTYIASERIIPGYGGGMSSAKAALESDTRVLAYEAGRKSNIRVNTISAGPLGSRAAKAIGFIDTMIEYSYNNGPIQKTLTADEVGNAAAFLASPLASAITGATIYVDNGLNAMGVALDSPVFKDLNSKN.

The N-terminal 74 residues, 1–74, are a transit peptide targeting the chloroplast; sequence MAATAASSLQ…CKRPFSFSTR (74 aa). Positions 53 and 170 each coordinate NADP(+). Residue Ser-239 is the Proton donor of the active site. NADP(+) contacts are provided by Lys-282 and Ser-314. The active-site Lowers pKa of active site Tyr is Lys-282.

This sequence belongs to the short-chain dehydrogenases/reductases (SDR) family. FabI subfamily. As to quaternary structure, homotetramer. As to expression, expressed in flowers and siliques and at lower levels in roots and leaves (at protein level).

The protein localises to the plastid. Its subcellular location is the chloroplast. It carries out the reaction a 2,3-saturated acyl-[ACP] + NAD(+) = a (2E)-enoyl-[ACP] + NADH + H(+). The protein operates within lipid metabolism; fatty acid biosynthesis. With respect to regulation, inhibited by the phytotoxin cyperin and the synthetic antimicrobial compound triclosan. Functionally, catalyzes the NAD-dependent reduction of a carbon-carbon double bond in an enoyl moiety that is covalently linked to an acyl carrier protein (ACP). Catalyzes the last reduction step in the de novo synthesis cycle of fatty acids. Involved in the elongation cycle of fatty acids which are used in lipid metabolism. Required for normal plant growth. This Arabidopsis thaliana (Mouse-ear cress) protein is Enoyl-[acyl-carrier-protein] reductase [NADH], chloroplastic (MOD1).